The chain runs to 876 residues: Extended synaptotagmin-2-B (876 aa).

Residues 1–21 form a disordered region; sequence MASESGAEKGPPTTPAENGQP. Over 1–35 the chain is Cytoplasmic; sequence MASESGAEKGPPTTPAENGQPGVPIAAAVAADEQG. The chain crosses the membrane as a helical span at residues 36 to 56; that stretch reads MISVDIAGLFYQFSKTFILIF. Residues 57 to 59 lie on the Lumenal side of the membrane; that stretch reads PVY. The chain crosses the membrane as a helical span at residues 60–80; that stretch reads VLGYFGLSFSWLLIALVLLLW. Over 81 to 876 the chain is Cytoplasmic; it reads WRRNKGNKNS…EDGTRAAASS (796 aa). The SMP-LTD domain maps to 123-302; sequence DIERAEWLNK…LPNRITVPLV (180 aa). C2 domains follow at residues 301–421 and 446–592; these read LVSD…DEWF and NLDQ…HLNN. Residues lysine 332, aspartate 333, aspartate 345, aspartate 392, glutamate 393, aspartate 394, aspartate 396, aspartate 398, and aspartate 399 each coordinate Ca(2+). The interval 614-714 is disordered; it reads VRSPDEQHTS…KEPTPSIASD (101 aa). Residues 636 to 656 show a composition bias toward pro residues; sequence PPTPQMPAPSPAVAHKPPPTP. Low complexity predominate over residues 686-698; it reads SSSSLSGSSFTYS. The 123-residue stretch at 741-863 folds into the C2 3 domain; that stretch reads PLGQIQLTIR…DAAKGWTQWF (123 aa). Residues 788–795 form a required for phosphatidylinositol 4,5-bisphosphate-dependent location at the cell membrane region; it reads KRRSGRRK.

It belongs to the extended synaptotagmin family. In terms of assembly, interacts with fgfr1 that has been activated by fgf1 binding. Interacts (via C2 domains) with the AP-2 complex (via an alpha subunit). Identified in a complex with the AP-2 complex and fgfr1.

It is found in the cell membrane. The protein resides in the endoplasmic reticulum membrane. In terms of biological role, tethers the endoplasmic reticulum to the cell membrane and promotes the formation of appositions between the endoplasmic reticulum and the cell membrane. Binds glycerophospholipids in a barrel-like domain and may play a role in cellular lipid transport. Plays a role in the rapid internalization of fgfr1 that has been activated by fgf1 binding; this occurs most likely via the AP-2 complex. Required for normal fgf signaling and the activation of downstream signaling cascades via its role in the internalization of activated fgfr1. Required for normal embryonic development via its role in fgf signaling and the downstream regulation of t/xBRA expression. The sequence is that of Extended synaptotagmin-2-B (esyt2-b) from Xenopus laevis (African clawed frog).